A 216-amino-acid polypeptide reads, in one-letter code: MOB kinase activator 3C (216 aa).

Zn(2+) is bound by residues Cys82, Cys87, His164, and His169.

The protein belongs to the MOB1/phocein family.

Its function is as follows. May regulate the activity of kinases. The polypeptide is MOB kinase activator 3C (MOB3C) (Bos taurus (Bovine)).